Reading from the N-terminus, the 236-residue chain is 1-(5-phosphoribosyl)-5-[(5-phosphoribosylamino)methylideneamino] imidazole-4-carboxamide isomerase (236 aa).

Asp-8 serves as the catalytic Proton acceptor. The Proton donor role is filled by Asp-129.

The protein belongs to the HisA/HisF family.

The protein localises to the cytoplasm. The catalysed reaction is 1-(5-phospho-beta-D-ribosyl)-5-[(5-phospho-beta-D-ribosylamino)methylideneamino]imidazole-4-carboxamide = 5-[(5-phospho-1-deoxy-D-ribulos-1-ylimino)methylamino]-1-(5-phospho-beta-D-ribosyl)imidazole-4-carboxamide. The protein operates within amino-acid biosynthesis; L-histidine biosynthesis; L-histidine from 5-phospho-alpha-D-ribose 1-diphosphate: step 4/9. In Methanospirillum hungatei JF-1 (strain ATCC 27890 / DSM 864 / NBRC 100397 / JF-1), this protein is 1-(5-phosphoribosyl)-5-[(5-phosphoribosylamino)methylideneamino] imidazole-4-carboxamide isomerase.